A 344-amino-acid polypeptide reads, in one-letter code: MALLAPGTPIREGLDRIVNGRTGGLIVLGDGPEINGVCSGGFPLDVRLTPQALRELSKMDGGLVVSSDHERIKAAAVHFVPDGSLPTLETGTRHRTADRLSQQTGVPVVVVSASMSVMSLFLNGRRYLIERPEQLLARANQALATLASYRGRLVDEAENLTTLEIRDQVQVRDVAAVAQRVEMWRRIDAEVRGYVSALGVEGRLVQLQRNELSLGVEDLGRLLTDDYRPNSVAPGGFSLSGLQKLSWEDLLNVTMVAETINLGPAEHPLDSPIRARGHRQLTLMTDLSSRTIQRIIDHFSDLQSLVSASTSELGDIKGVGLRRAREIRQGLESIFEGDQRTHHH.

The DAC domain maps to Met-1 to Glu-133. ATP is bound by residues Gly-61 and Thr-92 to Thr-96.

Belongs to the DisA family. In terms of assembly, homooctamer. Mg(2+) serves as cofactor.

It carries out the reaction 2 ATP = 3',3'-c-di-AMP + 2 diphosphate. Participates in a DNA-damage check-point. DisA forms globular foci that rapidly scan along the chromosomes searching for lesions. Functionally, also has diadenylate cyclase activity, catalyzing the condensation of 2 ATP molecules into cyclic di-AMP (c-di-AMP). c-di-AMP likely acts as a signaling molecule that may couple DNA integrity with a cellular process. The sequence is that of DNA integrity scanning protein DisA from Cutibacterium acnes (strain DSM 16379 / KPA171202) (Propionibacterium acnes).